The chain runs to 600 residues: Putative acetyltransferase MPN_114 (600 aa).

H323 serves as the catalytic Proton acceptor. CoA is bound at residue 396 to 409; that stretch reads TKPLIKAKGIKNSE.

This sequence belongs to the carnitine/choline acetyltransferase family.

In Mycoplasma pneumoniae (strain ATCC 29342 / M129 / Subtype 1) (Mycoplasmoides pneumoniae), this protein is Putative acetyltransferase MPN_114.